A 454-amino-acid chain; its full sequence is Phosphoglucosamine mutase (454 aa).

Ser-104 serves as the catalytic Phosphoserine intermediate. Mg(2+) is bound by residues Ser-104, Asp-244, Asp-246, and Asp-248. At Ser-104 the chain carries Phosphoserine.

This sequence belongs to the phosphohexose mutase family. It depends on Mg(2+) as a cofactor. Post-translationally, activated by phosphorylation.

It catalyses the reaction alpha-D-glucosamine 1-phosphate = D-glucosamine 6-phosphate. Catalyzes the conversion of glucosamine-6-phosphate to glucosamine-1-phosphate. This Lacticaseibacillus paracasei (strain ATCC 334 / BCRC 17002 / CCUG 31169 / CIP 107868 / KCTC 3260 / NRRL B-441) (Lactobacillus paracasei) protein is Phosphoglucosamine mutase.